We begin with the raw amino-acid sequence, 306 residues long: MTLNGGSGAGGSRSAGRERDRRRGSTPWGPAPPLHRRSMPVDERDLQAALTPGSLAATAAGTRTQGQRLDWPEGSSDSLSSGDSGSEDGVYKVHAAGAPGVGKSALARIFGGVEDGPEAEAAGHTYDRSITVDGEEASLMVYDIWEQDGGCWLPGHCMAMGDAYVIVYSITDKGSFEKASELRVQLRARRQTDVPIILVGNKSDLVRSREVSVDEGRACAEVFDCKFIETSAALHHNVQALFEGVVRQIRLRRDSKEDNARRQAGTRRRESLGKKAKLFLGRIVARNSRKMAFLAKSKSCHDLSVL.

Gly residues predominate over residues methionine 1 to arginine 13. The segment at methionine 1 to tyrosine 91 is disordered. Arginine 23 carries the omega-N-methylarginine modification. Phosphoserine is present on serine 25. The span at alanine 56–aspartate 88 shows a compositional bias: low complexity. Residues glycine 97–serine 104 and asparagine 201–aspartate 204 each bind GTP. The segment at alanine 276–alanine 295 is calmodulin-binding.

It belongs to the small GTPase superfamily. RGK family. As to quaternary structure, interacts with Calmodulin preferentially in the inactive, GDP-bound form. Interacts with CAMK2D. Interacts with CACNB2; interaction may be involved in beta-adrenergic regulation of heart rate and contractile force. Interaction with CACNB2 regulates the trafficking of CACNA1C to the cell membrane.

The protein resides in the cell membrane. May regulate basal voltage-dependent L-type Ca(2+) currents and be required for beta-adrenergic augmentation of Ca(2+) influx in cardiomyocytes, thereby regulating increases in heart rate and contractile force. May play an important role in cardiac antiarrhythmia via the strong suppression of voltage-dependent L-type Ca(2+) currents. Regulates voltage-gated L-type calcium channel subunit alpha-1C trafficking to the cell membrane. Inhibits cardiac hypertrophy through the calmodulin-dependent kinase II (CaMKII) pathway. Inhibits phosphorylation and activation of CAMK2D. The chain is GTP-binding protein RAD (Rrad) from Rattus norvegicus (Rat).